The following is a 2009-amino-acid chain: Sodium channel protein type 1 subunit alpha (2009 aa).

Over 1 to 128 the chain is Cytoplasmic; the sequence is MEQTVLVPPG…KIAIKILVHS (128 aa). Positions 28–48 are enriched in basic and acidic residues; that stretch reads RIAEEKAKNPKPDKKDDDENG. Positions 28–60 are disordered; the sequence is RIAEEKAKNPKPDKKDDDENGPKPNSDLEAGKN. An I repeat occupies 110-454; sequence ILTPFNPLRK…QQMLEQLKKQ (345 aa). A helical membrane pass occupies residues 129–146; that stretch reads LFSMLIMCTILTNCVFMT. Over 147 to 152 the chain is Extracellular; it reads MSNPPD. A helical membrane pass occupies residues 153–177; the sequence is WTKNVEYTFTGIYTFESLIKIIARG. The Cytoplasmic portion of the chain corresponds to 178–188; sequence FCLEDFTFLRD. Residues 189–205 traverse the membrane as a helical segment; that stretch reads PWNWLDFTVITFAYVTE. Topologically, residues 206–213 are extracellular; it reads FVDLGNVS. N-linked (GlcNAc...) asparagine glycosylation occurs at asparagine 211. The chain crosses the membrane as a helical span at residues 214–235; that stretch reads ALRTFRVLRALKTISVIPGLKT. The Cytoplasmic segment spans residues 236–245; the sequence is IVGALIQSVK. The chain crosses the membrane as a helical span at residues 246–269; sequence KLSDVMILTVFCLSVFALIGLQLF. The Extracellular segment spans residues 270-369; that stretch reads MGNLRNKCVQ…YGYTSFDTFS (100 aa). 2 disulfides stabilise this stretch: cysteine 277-cysteine 345 and cysteine 336-cysteine 351. N-linked (GlcNAc...) asparagine glycans are attached at residues asparagine 284, asparagine 295, asparagine 301, asparagine 306, and asparagine 338. An intramembrane region (pore-forming) is located at residues 370–384; that stretch reads WAFLSLFRLMTQDFW. At 385-397 the chain is on the extracellular side; it reads ENLYQLTLRAAGK. Residues 398 to 423 form a helical membrane-spanning segment; the sequence is TYMIFFVLVIFLGSFYLINLILAVVA. Residues 424–768 are Cytoplasmic-facing; the sequence is MAYEEQNQAT…HIVNLVVMDP (345 aa). Residues 458–528 form a disordered region; it reads AQQAAAATAS…EFHKSESEDS (71 aa). The residue at position 470 (serine 470) is a Phosphoserine. The span at 479–492 shows a compositional bias: low complexity; the sequence is LSDSSSEASKLSSK. Residues 495 to 506 show a composition bias toward basic residues; the sequence is KERRNRRKKRKQ. A compositionally biased stretch (basic and acidic residues) spans 507-528; the sequence is KEQSGGEEKDDDEFHKSESEDS. Phosphoserine occurs at positions 523, 525, 550, 551, 607, and 730. Residues 584–628 are disordered; it reads VGSENDFADDEHSTFEDNESRRDSLFVPRRHGERRNSNLSQTSRS. Residues 593 to 607 are compositionally biased toward basic and acidic residues; sequence DEHSTFEDNESRRDS. An II repeat occupies 750 to 1022; sequence CSPYWLKVKH…QIAVDRMHKG (273 aa). Residues 769–787 traverse the membrane as a helical segment; it reads FVDLAITICIVLNTLFMAM. Residues 788–797 are Extracellular-facing; it reads EHYPMTEHFN. The helical transmembrane segment at 798 to 820 threads the bilayer; sequence HVLTVGNLVFTGIFTAEMFLKII. The Cytoplasmic segment spans residues 821 to 830; the sequence is AMDPYYYFQE. Residues 831 to 849 form a helical membrane-spanning segment; it reads GWNIFDGFIVTLSLVELGL. Residues 850–854 lie on the Extracellular side of the membrane; that stretch reads ANVEG. The chain crosses the membrane as a helical span at residues 855-874; it reads LSVLRSFRLLRVFKLAKSWP. Residues 875 to 891 are Cytoplasmic-facing; that stretch reads TLNMLIKIIGNSVGALG. The chain crosses the membrane as a helical span at residues 892–912; sequence NLTLVLAIIVFIFAVVGMQLF. Over 913 to 938 the chain is Extracellular; it reads GKSYKDCVCKIATDCKLPRWHMNDFF. Cysteine 921 and cysteine 927 form a disulfide bridge. An intramembrane region (pore-forming) is located at residues 939-952; the sequence is HSFLIVFRVLCGEW. At 953–965 the chain is on the extracellular side; it reads IETMWDCMEVAGQ. An intrachain disulfide couples cysteine 959 to cysteine 968. The helical transmembrane segment at 966-992 threads the bilayer; the sequence is AMCLTVFMMVMVIRNLVVLNLFLALLL. Over 993–1218 the chain is Cytoplasmic; the sequence is SSFSADNLAA…RTCFRIVEHN (226 aa). The tract at residues 1129 to 1163 is disordered; that stretch reads TEDFSSESDLEESKEKLNESSSSSEGSTVDIGAPA. The III repeat unit spans residues 1200 to 1514; sequence RGKQWWNLRR…KKYYNAMKKL (315 aa). Residues 1219–1237 form a helical membrane-spanning segment; that stretch reads WFETFIVFMILLSSGALAF. At 1238–1250 the chain is on the extracellular side; sequence EDIYIDQRKTIKT. The chain crosses the membrane as a helical span at residues 1251 to 1276; that stretch reads MLEYADKVFTYIFILEMLLKWVAYGY. Residues 1277–1278 are Cytoplasmic-facing; sequence QT. A helical transmembrane segment spans residues 1279–1304; that stretch reads YFTNAWCWLDFLIVDVSLVSLTANAL. At 1305–1313 the chain is on the extracellular side; that stretch reads GYSELGAIK. A helical membrane pass occupies residues 1314–1332; sequence SLRTLRALRPLRALSRFEG. The Cytoplasmic portion of the chain corresponds to 1333-1345; it reads MRVVVNALLGAIP. The chain crosses the membrane as a helical span at residues 1346–1369; it reads SIMNVLLVCLIFWLIFSIMGVNLF. At 1370–1415 the chain is on the extracellular side; sequence AGKFYHCVNTTTGDTFEITEVNNHSDCLKLIERNETARWKNVKVNF. A disulfide bridge links cysteine 1376 with cysteine 1396. 3 N-linked (GlcNAc...) asparagine glycosylation sites follow: asparagine 1378, asparagine 1392, and asparagine 1403. The pore-forming intramembrane region spans 1416–1433; the sequence is DNVGFGYLSLLQVATFKG. Topologically, residues 1434–1457 are extracellular; sequence WMDIMYAAVDSRNVELQPKYEESL. Residues 1458–1483 traverse the membrane as a helical segment; the sequence is YMYLYFVIFIIFGSFFTLNLFIGVII. Residues 1484-1541 lie on the Cytoplasmic side of the membrane; it reads DNFNQQKKKFGGQDIFMTEEQKKYYNAMKKLGSKKPQKPIPRPGNKFQGMVFDFVTRQ. The residue at position 1516 (serine 1516) is a Phosphoserine; by PKC. The IV repeat unit spans residues 1523-1821; that stretch reads IPRPGNKFQG…WEKFDPDATQ (299 aa). A helical transmembrane segment spans residues 1542–1560; that stretch reads VFDISIMILICLNMVTMMV. Residues 1561 to 1571 lie on the Extracellular side of the membrane; the sequence is ETDDQSDYVTS. Residues 1561–1571 are S1-S2 loop of repeat IV; the sequence is ETDDQSDYVTS. A helical transmembrane segment spans residues 1572-1593; the sequence is ILSRINLVFIVLFTGECVLKLI. Residues 1594 to 1601 are Cytoplasmic-facing; that stretch reads SLRHYYFT. A helical transmembrane segment spans residues 1602 to 1623; that stretch reads IGWNIFDFVVVILSIVGMFLAE. The segment at 1619-1636 is S3b-S4 loop of repeat IV; that stretch reads MFLAELIEKYFVSPTLFR. The Extracellular portion of the chain corresponds to 1624–1636; it reads LIEKYFVSPTLFR. Residues 1637 to 1655 form a helical membrane-spanning segment; the sequence is VIRLARIGRILRLIKGAKG. Topologically, residues 1656 to 1665 are cytoplasmic; it reads IRTLLFALMM. Residues 1666–1688 form a helical membrane-spanning segment; it reads SLPALFNIGLLLFLVMFIYAIFG. Residues 1689–1711 lie on the Extracellular side of the membrane; the sequence is MSNFAYVKREVGIDDMFNFETFG. Residues 1712–1726 constitute an intramembrane region (pore-forming); sequence NSMICLFQITTSAGW. Residues 1727–1759 lie on the Extracellular side of the membrane; that stretch reads DGLLAPILNSKPPDCDPNKVNPGSSVKGDCGNP. Residues cysteine 1741 and cysteine 1756 are joined by a disulfide bond. A helical transmembrane segment spans residues 1760 to 1788; the sequence is SVGIFFFVSYIIISFLVVVNMYIAVILEN. At 1789 to 2009 the chain is on the cytoplasmic side; sequence FSVATEESAE…EGKDEKAKGK (221 aa). Residues 1915 to 1944 enclose the IQ domain; the sequence is EEVSAVIIQRAYRRHLLKRTVKQASFTYNK. The interval 1986 to 2009 is disordered; that stretch reads YDRVTKPIVEKHEQEGKDEKAKGK. The segment covering 1988 to 2009 has biased composition (basic and acidic residues); sequence RVTKPIVEKHEQEGKDEKAKGK.

The protein belongs to the sodium channel (TC 1.A.1.10) family. Nav1.1/SCN1A subfamily. In terms of assembly, the Nav1.1 voltage-gated sodium channel consists of an ion-conducting alpha subunit SCN1A which is functional on its own regulated by one or more beta-1 (SCN1B), beta-2 (SCN2B), beta-3 (SCN3B) and beta-4 (SCN4B) subunits. SCN1B and SCN3B are non-covalently associated with SCN1A. SCN2B and SCN4B are disulfide-linked to SCN1A. SCN1B regulates both the expression at the plasma membrane and the voltage dependence of Nav1.1 inactivation. SCN3B and SCN4B reduce Nav1.1 conductance. Probably interacts with TMEM233; modulates the gating properties of NaV1.1. Interacts with FGF13; regulates the steady-state inactivation of Nav.1.1. Post-translationally, phosphorylation at Ser-1516 by PKC in a highly conserved cytoplasmic loop slows inactivation of the sodium channel and reduces peak sodium currents.

It is found in the cell membrane. The enzyme catalyses Na(+)(in) = Na(+)(out). Activated by the spider toxins Hm1a and Hm1b (H.maculata, AC P60992 and AC P0DOC5) eliciting acute pain and mechanical allodynia. Inhibited by the conotoxin GVIIJ. Pore-forming subunit of Nav1.1, a voltage-gated sodium (Nav) channel that directly mediates the depolarizing phase of action potentials in excitable membranes. Navs, also called VGSCs (voltage-gated sodium channels) or VDSCs (voltage-dependent sodium channels), operate by switching between closed and open conformations depending on the voltage difference across the membrane. In the open conformation they allow Na(+) ions to selectively pass through the pore, along their electrochemical gradient. The influx of Na(+) ions provokes membrane depolarization, initiating the propagation of electrical signals throughout cells and tissues. By regulating the excitability of neurons, ensures that they respond appropriately to synaptic inputs, maintaining the balance between excitation and inhibition in brain neural circuits. Nav1.1 plays a role in controlling the excitability and action potential propagation from somatosensory neurons, thereby contributing to the sensory perception of mechanically-induced pain. In Rattus norvegicus (Rat), this protein is Sodium channel protein type 1 subunit alpha.